The chain runs to 415 residues: Lupus La protein homolog (415 aa).

One can recognise an HTH La-type RNA-binding domain in the interval 7 to 99 (NEKMAALEAK…RRSPSRPLPE (93 aa)). Phosphoserine occurs at positions 92 and 94. One can recognise an RRM domain in the interval 111–187 (RSVYIKGFPT…TNLLILFKED (77 aa)). Position 116 is an N6-acetyllysine (Lys-116). Thr-120 carries the phosphothreonine modification. N6-acetyllysine occurs at positions 128 and 327. A xRRM domain is found at 226–343 (EGKMGCLLKF…HAARRFKGSH (118 aa)). Residues 323–415 (ESLNKWKSKG…KKRENGARDK (93 aa)) form a disordered region. Basic residues predominate over residues 328–341 (WKSKGGHAARRFKG). Position 356 is an N6-acetyllysine (Lys-356). Thr-377 bears the Phosphothreonine mark. The segment covering 377–415 (TRFDDDDHRRGPVKRGIDGRDREEPASKHKKRENGARDK) has biased composition (basic and acidic residues).

Interacts with DDX15. May interact with RUFY1. In terms of processing, phosphorylated.

It localises to the nucleus. Binds to the 3' poly(U) terminus of nascent RNA polymerase III transcripts, protecting them from exonuclease digestion and facilitating their folding and maturation. This chain is Lupus La protein homolog (Ssb), found in Rattus norvegicus (Rat).